The primary structure comprises 339 residues: Glycerol-3-phosphate dehydrogenase [NAD(P)+] (339 aa).

4 residues coordinate NADPH: Ser15, Tyr16, His36, and Lys110. Residues Lys110, Gly139, and Thr141 each contribute to the sn-glycerol 3-phosphate site. Ala143 lines the NADPH pocket. Lys195, Asp248, Ser258, Arg259, and Asn260 together coordinate sn-glycerol 3-phosphate. The active-site Proton acceptor is the Lys195. Residue Arg259 participates in NADPH binding. Val283 and Glu285 together coordinate NADPH.

The protein belongs to the NAD-dependent glycerol-3-phosphate dehydrogenase family.

The protein resides in the cytoplasm. The enzyme catalyses sn-glycerol 3-phosphate + NAD(+) = dihydroxyacetone phosphate + NADH + H(+). It carries out the reaction sn-glycerol 3-phosphate + NADP(+) = dihydroxyacetone phosphate + NADPH + H(+). It functions in the pathway membrane lipid metabolism; glycerophospholipid metabolism. Catalyzes the reduction of the glycolytic intermediate dihydroxyacetone phosphate (DHAP) to sn-glycerol 3-phosphate (G3P), the key precursor for phospholipid synthesis. The sequence is that of Glycerol-3-phosphate dehydrogenase [NAD(P)+] from Pectobacterium atrosepticum (strain SCRI 1043 / ATCC BAA-672) (Erwinia carotovora subsp. atroseptica).